A 448-amino-acid polypeptide reads, in one-letter code: ATP-dependent protease ATPase subunit HslU (448 aa).

ATP is bound by residues isoleucine 18, 60–65 (GVGKTE), aspartate 261, glutamate 326, and arginine 398.

This sequence belongs to the ClpX chaperone family. HslU subfamily. As to quaternary structure, a double ring-shaped homohexamer of HslV is capped on each side by a ring-shaped HslU homohexamer. The assembly of the HslU/HslV complex is dependent on binding of ATP.

It localises to the cytoplasm. In terms of biological role, ATPase subunit of a proteasome-like degradation complex; this subunit has chaperone activity. The binding of ATP and its subsequent hydrolysis by HslU are essential for unfolding of protein substrates subsequently hydrolyzed by HslV. HslU recognizes the N-terminal part of its protein substrates and unfolds these before they are guided to HslV for hydrolysis. The chain is ATP-dependent protease ATPase subunit HslU from Paraburkholderia phytofirmans (strain DSM 17436 / LMG 22146 / PsJN) (Burkholderia phytofirmans).